The primary structure comprises 591 residues: L-fucose isomerase (591 aa).

Active-site proton acceptor residues include Glu337 and Asp361. Glu337, Asp361, and His528 together coordinate Mn(2+).

It belongs to the L-fucose isomerase family. As to quaternary structure, homohexamer. Mn(2+) serves as cofactor.

It localises to the cytoplasm. The enzyme catalyses L-fucose = L-fuculose. It participates in carbohydrate degradation; L-fucose degradation; L-lactaldehyde and glycerone phosphate from L-fucose: step 1/3. Functionally, converts the aldose L-fucose into the corresponding ketose L-fuculose. This Escherichia coli O6:H1 (strain CFT073 / ATCC 700928 / UPEC) protein is L-fucose isomerase.